Reading from the N-terminus, the 296-residue chain is Protoheme IX farnesyltransferase (296 aa).

The Cytoplasmic portion of the chain corresponds to 1–9 (MMFKQYLQV). Residues 10–28 (TKPGIIFGNLISVIGGFLL) traverse the membrane as a helical segment. Over 29–37 (ASKGSIDYP) the chain is Periplasmic. The chain crosses the membrane as a helical span at residues 38 to 56 (LFIYTLVGVSLVVASGCVF). The Cytoplasmic portion of the chain corresponds to 57-78 (NNYIDRDIDRKMERTKNRVLVK). A helical membrane pass occupies residues 79-97 (GLISPGVSLVYATLLGIAG). The Periplasmic segment spans residues 98 to 107 (FMLLWFGANP). A helical transmembrane segment spans residues 108–126 (LACWLGVMGFVVYVGVYSL). Over 127–197 (YMKRHSVYGT…YQAANIPVLP (71 aa)) the chain is Cytoplasmic. A helical membrane pass occupies residues 198-216 (VIKGISVAKNHITLYIIAF). The Periplasmic segment spans residues 217-228 (AVATLMLTLGGY). The helical transmembrane segment at 229 to 247 (AGYKYLVVAAAVSVWWLGM) threads the bilayer. The Cytoplasmic portion of the chain corresponds to 248-268 (ALRGYKVEDDKVWARKLFGFS). The helical transmembrane segment at 269–287 (IIAITALSIMMSVDFMVPN) threads the bilayer. Over 288–296 (SQNLLTYVW) the chain is Periplasmic.

The protein belongs to the UbiA prenyltransferase family. Protoheme IX farnesyltransferase subfamily.

Its subcellular location is the cell inner membrane. The enzyme catalyses heme b + (2E,6E)-farnesyl diphosphate + H2O = Fe(II)-heme o + diphosphate. Its pathway is porphyrin-containing compound metabolism; heme O biosynthesis; heme O from protoheme: step 1/1. Converts heme B (protoheme IX) to heme O by substitution of the vinyl group on carbon 2 of heme B porphyrin ring with a hydroxyethyl farnesyl side group. In Salmonella typhi, this protein is Protoheme IX farnesyltransferase.